We begin with the raw amino-acid sequence, 308 residues long: MQSPHISVLLDEVLDAFHGLSGTFIDCTLGYGGHSGALLEQNKNLRLIACDKDDEAIEFSKKRLENFGDRVKIYKSDFSQLIKVLSTDELKNVRGILADIGVSSLQLDKNERGFSINSDTLDMRMDRACEFSAADVINSYSQQNLAEIFSKYGELSNAKALAAKIVSARNLKKITSAKELASIIGTGRVNGRSVSPAILAFQAIRVEVNDELGELNRLLESIKSANLKECKVAIISFHSLEDRIVKNTFKSWAQSCICPPNAMRCKCGNDHAIGKILTKKAIVASQKEIAANPRSSSAKMRVFEIKGR.

Residues 32–34 (GGH), D51, F78, D99, and Q106 contribute to the S-adenosyl-L-methionine site.

The protein belongs to the methyltransferase superfamily. RsmH family.

It is found in the cytoplasm. The catalysed reaction is cytidine(1402) in 16S rRNA + S-adenosyl-L-methionine = N(4)-methylcytidine(1402) in 16S rRNA + S-adenosyl-L-homocysteine + H(+). Functionally, specifically methylates the N4 position of cytidine in position 1402 (C1402) of 16S rRNA. In Campylobacter curvus (strain 525.92), this protein is Ribosomal RNA small subunit methyltransferase H.